The sequence spans 228 residues: tRNA (guanine-N(1)-)-methyltransferase (228 aa).

Residues glycine 111 and 131–136 (IGDFIL) each bind S-adenosyl-L-methionine.

Belongs to the RNA methyltransferase TrmD family. As to quaternary structure, homodimer.

The protein resides in the cytoplasm. The enzyme catalyses guanosine(37) in tRNA + S-adenosyl-L-methionine = N(1)-methylguanosine(37) in tRNA + S-adenosyl-L-homocysteine + H(+). Functionally, specifically methylates guanosine-37 in various tRNAs. This chain is tRNA (guanine-N(1)-)-methyltransferase, found in Pelagibacter ubique (strain HTCC1062).